The sequence spans 513 residues: uncharacterized protein (513 aa).

This sequence belongs to the NodU/CmcH family.

This is an uncharacterized protein from Methanocaldococcus jannaschii (strain ATCC 43067 / DSM 2661 / JAL-1 / JCM 10045 / NBRC 100440) (Methanococcus jannaschii).